Reading from the N-terminus, the 590-residue chain is Glutamine--fructose-6-phosphate aminotransferase [isomerizing] (590 aa).

The Nucleophile; for GATase activity role is filled by Cys2. The region spanning 2-219 (CGIVACILKD…DGEMVILDGD (218 aa)) is the Glutamine amidotransferase type-2 domain. SIS domains lie at 277–415 (VVEE…PELM) and 438–580 (LAAT…PDKP). Lys585 serves as the catalytic For Fru-6P isomerization activity.

As to quaternary structure, homodimer.

The protein localises to the cytoplasm. The enzyme catalyses D-fructose 6-phosphate + L-glutamine = D-glucosamine 6-phosphate + L-glutamate. In terms of biological role, catalyzes the first step in hexosamine metabolism, converting fructose-6P into glucosamine-6P using glutamine as a nitrogen source. In Methanothermobacter thermautotrophicus (strain ATCC 29096 / DSM 1053 / JCM 10044 / NBRC 100330 / Delta H) (Methanobacterium thermoautotrophicum), this protein is Glutamine--fructose-6-phosphate aminotransferase [isomerizing].